The following is a 354-amino-acid chain: uncharacterized protein (354 aa).

The segment at 96-130 (QVCPASAPNGKRAMKIPKVKEPRGENSSKKSSADQ) is disordered. Basic and acidic residues predominate over residues 113-127 (KVKEPRGENSSKKSS).

This is an uncharacterized protein from Caenorhabditis elegans.